The chain runs to 210 residues: Putative cutinase (210 aa).

A compositionally biased stretch (basic and acidic residues) spans 26–38 (DSERLPLKRDEPG). The tract at residues 26 to 58 (DSERLPLKRDEPGSRSMRSTFIPSSQCSNLSSA) is disordered. Residues 49–58 (SSQCSNLSSA) are compositionally biased toward low complexity.

The catalysed reaction is cutin + H2O = cutin monomers.. The protein is Putative cutinase of Phytophthora capsici.